Consider the following 784-residue polypeptide: Protein-tyrosine-phosphatase MKP1 (784 aa).

Disordered regions lie at residues 1–73 and 94–118; these read MVGR…NSKA and PKAGSDDVGEWPHPPTPSGNKTGER. The span at 22 to 34 shows a compositional bias: low complexity; that stretch reads WRSASWSASRTAS. Phosphothreonine occurs at positions 64 and 109. A Tyrosine-protein phosphatase domain is found at 149 to 291; it reads ECSKVADHIY…LLQCQKRVHA (143 aa). Catalysis depends on Cys-235, which acts as the Phosphocysteine intermediate. Substrate is bound at residue 235–241; that stretch reads CCQGVSR. Residues 488–586 are disordered; sequence HSSGSPSSTT…ASPSLAERRG (99 aa). 2 stretches are compositionally biased toward low complexity: residues 489–510 and 521–553; these read SSGSPSSTTSSSSTASPPFLSP and SLKSFSQSSGRSSLRPSIPPSLTLPKFSSLSLL. Polar residues predominate over residues 554 to 577; that stretch reads PSQTSPKESRGVNTFLQPSPNRKA. A phosphoserine mark is found at Ser-558 and Ser-572.

In terms of assembly, interacts with MPK6. May interact with MPK3 and MPK4. Phosphorylated on threonine and serine residues by MPK6.

It localises to the cytoplasm. The protein localises to the cytosol. The catalysed reaction is O-phospho-L-tyrosyl-[protein] + H2O = L-tyrosyl-[protein] + phosphate. Functionally, protein-tyrosine-phosphatase that acts as a negative regulator of MPK6 and MPK3 signaling by dephosphorylating and repressing MPK6 and MPK3. Modulates defense response by repressing salicylic acid (SA) production, camalexin biosynthesis and SNC1-mediated responses. Acts as a negative regulator of MPK6-mediated pathogen-associated molecular pattern (PAMP) responses, including MPK6 and MPK3 activation, accumulation of extracellular reactive oxygen species and inhibition of seedling growth. Involved in UV-B stress tolerance. May be involved in salt and genotoxic stress responses. The chain is Protein-tyrosine-phosphatase MKP1 (MKP1) from Arabidopsis thaliana (Mouse-ear cress).